The sequence spans 435 residues: ATP-dependent protease ATPase subunit HslU (435 aa).

ATP-binding positions include isoleucine 18, 60–65 (GVGKTE), aspartate 248, glutamate 313, and arginine 385.

The protein belongs to the ClpX chaperone family. HslU subfamily. As to quaternary structure, a double ring-shaped homohexamer of HslV is capped on each side by a ring-shaped HslU homohexamer. The assembly of the HslU/HslV complex is dependent on binding of ATP.

Its subcellular location is the cytoplasm. ATPase subunit of a proteasome-like degradation complex; this subunit has chaperone activity. The binding of ATP and its subsequent hydrolysis by HslU are essential for unfolding of protein substrates subsequently hydrolyzed by HslV. HslU recognizes the N-terminal part of its protein substrates and unfolds these before they are guided to HslV for hydrolysis. The chain is ATP-dependent protease ATPase subunit HslU from Rhizobium leguminosarum bv. trifolii (strain WSM2304).